Reading from the N-terminus, the 587-residue chain is MTSSIECKNFLRSLQLLNLLIKIGVKNLILCPGSRSAPLAIAAGELNKLGLVNIFNSIDERSAGFHSLGISAASGHLSLVITTSGTAVSNLLPAAVEADRSCKGIIFLTADRPLRLKDCGANQTVNQEDFLSSVCRKVLSTNLNGIHETEENEIFNLVRISEKQMSTFPGPIHLNVPIDKPLDISFLNKKNVLEVFERIYLKKKYVFQEVDIKSDKKKFLEISKNLNLDESGIILVGPYQGSINDLPSFNKSLGQLQEITGWPVFADPVSGVYSDLRGLIVNWELVLRKNKNLINCYQLLRLGPMSSSNDLEKFLINFQGVQILIKEKNHRKLDPIKKSFEYDFGLTNFTSLLKKELSINEKNKKSLTPLALDLLEEGKQVKEILKGNITYENQITEYRLANLVPKLWPAENPIMLSASSPIRDWLTFSENGTLTRNCFSFRGASGIDGTLSLALGISRIKNPLLLVTGDLAFLHDINGWLIENSIDMNLTILLINNNGGNIFNRIYKKNLKEDEFKKLFLMPKEINWPKLAEGYQVNFRSVANFKKLREAFDWSISIEKSAIIKVDIDPQNEICEKNSLLEKIIGS.

The protein belongs to the TPP enzyme family. MenD subfamily. Homodimer. It depends on Mg(2+) as a cofactor. Mn(2+) serves as cofactor. Thiamine diphosphate is required as a cofactor.

The enzyme catalyses isochorismate + 2-oxoglutarate + H(+) = 5-enolpyruvoyl-6-hydroxy-2-succinyl-cyclohex-3-ene-1-carboxylate + CO2. It functions in the pathway quinol/quinone metabolism; 1,4-dihydroxy-2-naphthoate biosynthesis; 1,4-dihydroxy-2-naphthoate from chorismate: step 2/7. The protein operates within cofactor biosynthesis; phylloquinone biosynthesis. Catalyzes the thiamine diphosphate-dependent decarboxylation of 2-oxoglutarate and the subsequent addition of the resulting succinic semialdehyde-thiamine pyrophosphate anion to isochorismate to yield 2-succinyl-5-enolpyruvyl-6-hydroxy-3-cyclohexene-1-carboxylate (SEPHCHC). The polypeptide is 2-succinyl-5-enolpyruvyl-6-hydroxy-3-cyclohexene-1-carboxylate synthase (Prochlorococcus marinus (strain AS9601)).